The sequence spans 119 residues: Large ribosomal subunit protein bL20 (119 aa).

The protein belongs to the bacterial ribosomal protein bL20 family.

Functionally, binds directly to 23S ribosomal RNA and is necessary for the in vitro assembly process of the 50S ribosomal subunit. It is not involved in the protein synthesizing functions of that subunit. The chain is Large ribosomal subunit protein bL20 from Nitrobacter winogradskyi (strain ATCC 25391 / DSM 10237 / CIP 104748 / NCIMB 11846 / Nb-255).